The following is a 614-amino-acid chain: Dihydroxy-acid dehydratase (614 aa).

Position 81 (aspartate 81) interacts with Mg(2+). Cysteine 122 contacts [2Fe-2S] cluster. Mg(2+) is bound by residues aspartate 123 and lysine 124. An N6-carboxylysine modification is found at lysine 124. [2Fe-2S] cluster is bound at residue cysteine 196. Glutamate 492 contacts Mg(2+). Serine 518 acts as the Proton acceptor in catalysis.

The protein belongs to the IlvD/Edd family. In terms of assembly, homodimer. [2Fe-2S] cluster is required as a cofactor. Requires Mg(2+) as cofactor.

The enzyme catalyses (2R)-2,3-dihydroxy-3-methylbutanoate = 3-methyl-2-oxobutanoate + H2O. It catalyses the reaction (2R,3R)-2,3-dihydroxy-3-methylpentanoate = (S)-3-methyl-2-oxopentanoate + H2O. Its pathway is amino-acid biosynthesis; L-isoleucine biosynthesis; L-isoleucine from 2-oxobutanoate: step 3/4. It functions in the pathway amino-acid biosynthesis; L-valine biosynthesis; L-valine from pyruvate: step 3/4. Functionally, functions in the biosynthesis of branched-chain amino acids. Catalyzes the dehydration of (2R,3R)-2,3-dihydroxy-3-methylpentanoate (2,3-dihydroxy-3-methylvalerate) into 2-oxo-3-methylpentanoate (2-oxo-3-methylvalerate) and of (2R)-2,3-dihydroxy-3-methylbutanoate (2,3-dihydroxyisovalerate) into 2-oxo-3-methylbutanoate (2-oxoisovalerate), the penultimate precursor to L-isoleucine and L-valine, respectively. This chain is Dihydroxy-acid dehydratase, found in Ruegeria sp. (strain TM1040) (Silicibacter sp.).